Here is a 493-residue protein sequence, read N- to C-terminus: Probable cytosol aminopeptidase (493 aa).

K257 and D262 together coordinate Mn(2+). Residue K269 is part of the active site. Mn(2+) contacts are provided by D281, D341, and E343. The active site involves R345.

The protein belongs to the peptidase M17 family. The cofactor is Mn(2+).

The protein resides in the cytoplasm. It catalyses the reaction Release of an N-terminal amino acid, Xaa-|-Yaa-, in which Xaa is preferably Leu, but may be other amino acids including Pro although not Arg or Lys, and Yaa may be Pro. Amino acid amides and methyl esters are also readily hydrolyzed, but rates on arylamides are exceedingly low.. The enzyme catalyses Release of an N-terminal amino acid, preferentially leucine, but not glutamic or aspartic acids.. Functionally, presumably involved in the processing and regular turnover of intracellular proteins. Catalyzes the removal of unsubstituted N-terminal amino acids from various peptides. The sequence is that of Probable cytosol aminopeptidase from Prochlorococcus marinus (strain MIT 9211).